We begin with the raw amino-acid sequence, 420 residues long: Peroxisomal biogenesis factor 3 (420 aa).

Residues 1–16 (MPIFSSLNSFLRRHKK) lie on the Peroxisomal side of the membrane. Residues 17–37 (KLIVTATLTFSAYFLVNQFII) traverse the membrane as a helical segment. At 38–420 (KKLKNFQNSL…FSASIYSNFE (383 aa)) the chain is on the cytoplasmic side.

The protein belongs to the peroxin-3 family.

It localises to the peroxisome membrane. In terms of biological role, involved in peroxisome biosynthesis. The chain is Peroxisomal biogenesis factor 3 (PEX3) from Debaryomyces hansenii (strain ATCC 36239 / CBS 767 / BCRC 21394 / JCM 1990 / NBRC 0083 / IGC 2968) (Yeast).